The sequence spans 244 residues: Protein DCG1 (244 aa).

It belongs to the HyuE racemase family.

The chain is Protein DCG1 (DCG1) from Saccharomyces cerevisiae (strain ATCC 204508 / S288c) (Baker's yeast).